Here is a 403-residue protein sequence, read N- to C-terminus: Argininosuccinate synthase (403 aa).

10–18 contributes to the ATP binding site; sequence AYSGGLDTS. Tyrosine 87 provides a ligand contact to L-citrulline. Glycine 117 contributes to the ATP binding site. Positions 119, 123, and 124 each coordinate L-aspartate. Asparagine 123 is an L-citrulline binding site. Arginine 127, serine 175, glutamate 260, and tyrosine 272 together coordinate L-citrulline.

It belongs to the argininosuccinate synthase family. Type 1 subfamily. As to quaternary structure, homotetramer.

It is found in the cytoplasm. It catalyses the reaction L-citrulline + L-aspartate + ATP = 2-(N(omega)-L-arginino)succinate + AMP + diphosphate + H(+). It functions in the pathway amino-acid biosynthesis; L-arginine biosynthesis; L-arginine from L-ornithine and carbamoyl phosphate: step 2/3. The sequence is that of Argininosuccinate synthase from Bacillus velezensis (strain DSM 23117 / BGSC 10A6 / LMG 26770 / FZB42) (Bacillus amyloliquefaciens subsp. plantarum).